A 356-amino-acid chain; its full sequence is Tyrosine recombinase XerS (356 aa).

One can recognise a Core-binding (CB) domain in the interval 16 to 121 (LMPWYVLEYY…ALSSLYKYLT (106 aa)). The Tyr recombinase domain maps to 169 to 354 (GFLTYIDQEH…VSDEQKNALD (186 aa)). Residues Arg210, Lys234, His306, Arg309, and His332 contribute to the active site. Catalysis depends on Tyr341, which acts as the O-(3'-phospho-DNA)-tyrosine intermediate.

Belongs to the 'phage' integrase family. XerS subfamily.

The protein localises to the cytoplasm. Its activity is regulated as follows. FtsK is required for recombination. Functionally, site-specific tyrosine recombinase, which acts by catalyzing the cutting and rejoining of the recombining DNA molecules. Essential to convert dimers of the bacterial chromosome into monomers to permit their segregation at cell division. The protein is Tyrosine recombinase XerS of Streptococcus pneumoniae (strain 70585).